A 163-amino-acid chain; its full sequence is 3-hydroxyacyl-[acyl-carrier-protein] dehydratase FabZ (163 aa).

His-61 is a catalytic residue.

Belongs to the thioester dehydratase family. FabZ subfamily.

It localises to the cytoplasm. It catalyses the reaction a (3R)-hydroxyacyl-[ACP] = a (2E)-enoyl-[ACP] + H2O. In terms of biological role, involved in unsaturated fatty acids biosynthesis. Catalyzes the dehydration of short chain beta-hydroxyacyl-ACPs and long chain saturated and unsaturated beta-hydroxyacyl-ACPs. This chain is 3-hydroxyacyl-[acyl-carrier-protein] dehydratase FabZ, found in Dinoroseobacter shibae (strain DSM 16493 / NCIMB 14021 / DFL 12).